Consider the following 1412-residue polypeptide: DNA-directed RNA polymerase subunit beta' (1412 aa).

Residues C71, C73, C86, and C89 each coordinate Zn(2+). The Mg(2+) site is built by D461, D463, and D465. Zn(2+) contacts are provided by C815, C889, C896, and C899.

It belongs to the RNA polymerase beta' chain family. In terms of assembly, the RNAP catalytic core consists of 2 alpha, 1 beta, 1 beta' and 1 omega subunit. When a sigma factor is associated with the core the holoenzyme is formed, which can initiate transcription. Mg(2+) is required as a cofactor. It depends on Zn(2+) as a cofactor.

It carries out the reaction RNA(n) + a ribonucleoside 5'-triphosphate = RNA(n+1) + diphosphate. DNA-dependent RNA polymerase catalyzes the transcription of DNA into RNA using the four ribonucleoside triphosphates as substrates. The chain is DNA-directed RNA polymerase subunit beta' from Actinobacillus pleuropneumoniae serotype 5b (strain L20).